We begin with the raw amino-acid sequence, 308 residues long: Transcriptional adapter 1-2 (308 aa).

This sequence belongs to the TADA1 family. As to quaternary structure, component of the Spt-Ada-Gcn5 acetyltransferase (SAGA) complex consisting of wda/Taf5L, Saf6, Taf9, Taf10b, Taf12, Ada1, Spt3, Spt7, Spt20, Sf3b3, Sf3b5, Nipped-A/Tra1, a histone acetyltransferase (HAT) module made up of Gcn5, Ada2b (Isoform B), Ada3 and Sgf29, and a deubiquitinase (DUB) module made up of not/nonstop, Sgf11 and e(y)2 tethered to SAGA by Atxn7. Not a component of the Ada2a-containing ATAC complex.

The protein localises to the nucleus. Component of the transcription regulatory complex SAGA, a multiprotein complex that activates transcription by remodeling chromatin and mediating histone acetylation and deubiquitination. The SAGA complex predominantly acetylates histone H3. The protein is Transcriptional adapter 1-2 of Drosophila melanogaster (Fruit fly).